The sequence spans 1175 residues: Phospholipid-transporting ATPase IF (1175 aa).

A run of 4 helical transmembrane segments spans residues 69-89 (FYFL…SPIT), 91-111 (GLPL…EDWL), 287-307 (NTFL…STIL), and 338-358 (FISD…ISLY). The 4-aspartylphosphate intermediate role is filled by Asp-407. Residues Asp-407, Lys-408, Thr-409, Glu-530, Phe-571, Lys-594, Arg-625, Thr-705, Gly-706, Asp-707, Arg-793, and Lys-799 each coordinate ATP. Residue Asp-407 participates in Mg(2+) binding. Thr-409 lines the Mg(2+) pocket. Asp-820 contacts Mg(2+). Residues Asn-823 and Asp-824 each contribute to the ATP site. Asp-824 is a binding site for Mg(2+). The next 6 helical transmembrane spans lie at 862–882 (LLFV…QYFF), 910–930 (VYLT…YSLV), 963–983 (WTVL…FLVG), 994–1014 (MFGN…TVTV), 1033–1053 (GSII…WPFL), and 1060–1080 (FVFI…LMVV).

This sequence belongs to the cation transport ATPase (P-type) (TC 3.A.3) family. Type IV subfamily. As to quaternary structure, component of a P4-ATPase flippase complex which consists of a catalytic alpha subunit ATP11B and an accessory beta subunit TMEM30A. Mg(2+) is required as a cofactor. Expressed in retina, brain, liver, testes and kidney (at protein level).

The protein resides in the recycling endosome membrane. It is found in the early endosome. Its subcellular location is the endoplasmic reticulum. It localises to the golgi apparatus. The protein localises to the trans-Golgi network. It carries out the reaction ATP + H2O + phospholipidSide 1 = ADP + phosphate + phospholipidSide 2.. The catalysed reaction is a 1,2-diacyl-sn-glycero-3-phospho-L-serine(out) + ATP + H2O = a 1,2-diacyl-sn-glycero-3-phospho-L-serine(in) + ADP + phosphate + H(+). The enzyme catalyses a 1,2-diacyl-sn-glycero-3-phosphoethanolamine(out) + ATP + H2O = a 1,2-diacyl-sn-glycero-3-phosphoethanolamine(in) + ADP + phosphate + H(+). Functionally, catalytic component of a P4-ATPase flippase complex which catalyzes the hydrolysis of ATP coupled to the transport of aminophospholipids, phosphatidylserines (PS) and phosphatidylethanolamines (PE), from the outer to the inner leaflet of intracellular membranes. May contribute to the maintenance of membrane lipid asymmetry in endosome compartment. In Mus musculus (Mouse), this protein is Phospholipid-transporting ATPase IF.